The primary structure comprises 350 residues: Anthranilate phosphoribosyltransferase (350 aa).

Residues G94, 97 to 98, T102, 104 to 107, 122 to 130, and S134 each bind 5-phospho-alpha-D-ribose 1-diphosphate; these read GD, NIST, and KHGNRAVSS. An anthranilate-binding site is contributed by G94. S106 provides a ligand contact to Mg(2+). Residue N125 coordinates anthranilate. R180 contributes to the anthranilate binding site. The Mg(2+) site is built by D239 and E240.

Belongs to the anthranilate phosphoribosyltransferase family. Homodimer. Requires Mg(2+) as cofactor.

It catalyses the reaction N-(5-phospho-beta-D-ribosyl)anthranilate + diphosphate = 5-phospho-alpha-D-ribose 1-diphosphate + anthranilate. Its pathway is amino-acid biosynthesis; L-tryptophan biosynthesis; L-tryptophan from chorismate: step 2/5. In terms of biological role, catalyzes the transfer of the phosphoribosyl group of 5-phosphorylribose-1-pyrophosphate (PRPP) to anthranilate to yield N-(5'-phosphoribosyl)-anthranilate (PRA). In Geobacter sulfurreducens (strain ATCC 51573 / DSM 12127 / PCA), this protein is Anthranilate phosphoribosyltransferase.